We begin with the raw amino-acid sequence, 621 residues long: Na(+)/H(+) antiporter NhaA (621 aa).

The segment at Met-1–Ala-430 is na(+)/H(+) antiporter NhaA. Transmembrane regions (helical) follow at residues Gly-27 to Leu-47, Leu-72 to Val-92, Leu-109 to Val-129, Gly-139 to Gly-159, Val-168 to Val-188, Glu-192 to Gly-212, Val-223 to Ala-243, Phe-300 to Val-320, Val-339 to Val-359, Val-375 to Leu-395, and Val-409 to Ala-429. The Thioredoxin domain occupies Gln-431–Ala-578.

This sequence in the N-terminal section; belongs to the NhaA Na(+)/H(+) (TC 2.A.33) antiporter family.

The protein resides in the cell inner membrane. The catalysed reaction is Na(+)(in) + 2 H(+)(out) = Na(+)(out) + 2 H(+)(in). In terms of biological role, na(+)/H(+) antiporter that extrudes sodium in exchange for external protons. The protein is Na(+)/H(+) antiporter NhaA of Herminiimonas arsenicoxydans.